The sequence spans 193 residues: Orotate phosphoribosyltransferase (193 aa).

116 to 124 (EDVVTTGKS) is a binding site for 5-phospho-alpha-D-ribose 1-diphosphate. Positions 120 and 148 each coordinate orotate.

This sequence belongs to the purine/pyrimidine phosphoribosyltransferase family. PyrE subfamily. In terms of assembly, homodimer. Mg(2+) is required as a cofactor.

The catalysed reaction is orotidine 5'-phosphate + diphosphate = orotate + 5-phospho-alpha-D-ribose 1-diphosphate. It participates in pyrimidine metabolism; UMP biosynthesis via de novo pathway; UMP from orotate: step 1/2. Its function is as follows. Catalyzes the transfer of a ribosyl phosphate group from 5-phosphoribose 1-diphosphate to orotate, leading to the formation of orotidine monophosphate (OMP). This is Orotate phosphoribosyltransferase from Clostridium tetani (strain Massachusetts / E88).